We begin with the raw amino-acid sequence, 196 residues long: Pyridoxal 5'-phosphate synthase subunit PdxT (196 aa).

Residue 56–58 (GES) participates in L-glutamine binding. Residue cysteine 85 is the Nucleophile of the active site. L-glutamine contacts are provided by residues arginine 113 and 141–142 (IR). Residues histidine 177 and glutamate 179 each act as charge relay system in the active site.

Belongs to the glutaminase PdxT/SNO family. In terms of assembly, in the presence of PdxS, forms a dodecamer of heterodimers. Only shows activity in the heterodimer.

It carries out the reaction aldehydo-D-ribose 5-phosphate + D-glyceraldehyde 3-phosphate + L-glutamine = pyridoxal 5'-phosphate + L-glutamate + phosphate + 3 H2O + H(+). It catalyses the reaction L-glutamine + H2O = L-glutamate + NH4(+). The protein operates within cofactor biosynthesis; pyridoxal 5'-phosphate biosynthesis. Catalyzes the hydrolysis of glutamine to glutamate and ammonia as part of the biosynthesis of pyridoxal 5'-phosphate. The resulting ammonia molecule is channeled to the active site of PdxS. The polypeptide is Pyridoxal 5'-phosphate synthase subunit PdxT (Methanospirillum hungatei JF-1 (strain ATCC 27890 / DSM 864 / NBRC 100397 / JF-1)).